The following is a 124-amino-acid chain: Histone H2A (124 aa).

Positions 1–18 are enriched in basic residues; sequence MSGRGKSGKARTKAKSRS. The disordered stretch occupies residues 1–21; it reads MSGRGKSGKARTKAKSRSSRA. Ser-2 carries the N-acetylserine modification. Ser-2 is modified (phosphoserine). Gln-104 bears the N5-methylglutamine mark. A Glycyl lysine isopeptide (Lys-Gly) (interchain with G-Cter in ubiquitin) cross-link involves residue Lys-119.

It belongs to the histone H2A family. As to quaternary structure, the nucleosome is a histone octamer containing two molecules each of H2A, H2B, H3 and H4 assembled in one H3-H4 heterotetramer and two H2A-H2B heterodimers. The octamer wraps approximately 147 bp of DNA. Monoubiquitination of Lys-119 gives a specific tag for epigenetic transcriptional repression. Post-translationally, phosphorylation of Ser-2 directly represses transcription.

It localises to the nucleus. The protein localises to the chromosome. Functionally, core component of nucleosome. Nucleosomes wrap and compact DNA into chromatin, limiting DNA accessibility to the cellular machineries which require DNA as a template. Histones thereby play a central role in transcription regulation, DNA repair, DNA replication and chromosomal stability. DNA accessibility is regulated via a complex set of post-translational modifications of histones, also called histone code, and nucleosome remodeling. This Paracentrotus lividus (Common sea urchin) protein is Histone H2A.